The chain runs to 359 residues: Histidinol-phosphate aminotransferase (359 aa).

At K212 the chain carries N6-(pyridoxal phosphate)lysine.

Belongs to the class-II pyridoxal-phosphate-dependent aminotransferase family. Histidinol-phosphate aminotransferase subfamily. Homodimer. Requires pyridoxal 5'-phosphate as cofactor.

The enzyme catalyses L-histidinol phosphate + 2-oxoglutarate = 3-(imidazol-4-yl)-2-oxopropyl phosphate + L-glutamate. It participates in amino-acid biosynthesis; L-histidine biosynthesis; L-histidine from 5-phospho-alpha-D-ribose 1-diphosphate: step 7/9. In Buchnera aphidicola subsp. Melaphis rhois, this protein is Histidinol-phosphate aminotransferase.